Reading from the N-terminus, the 117-residue chain is Prefoldin subunit beta (117 aa).

Belongs to the prefoldin subunit beta family. As to quaternary structure, heterohexamer of two alpha and four beta subunits.

Its subcellular location is the cytoplasm. In terms of biological role, molecular chaperone capable of stabilizing a range of proteins. Seems to fulfill an ATP-independent, HSP70-like function in archaeal de novo protein folding. The sequence is that of Prefoldin subunit beta (pfdB) from Pyrococcus abyssi (strain GE5 / Orsay).